Reading from the N-terminus, the 249-residue chain is 1-(5-phosphoribosyl)-5-[(5-phosphoribosylamino)methylideneamino] imidazole-4-carboxamide isomerase (249 aa).

The active-site Proton acceptor is Asp8. The active-site Proton donor is the Asp131.

It belongs to the HisA/HisF family.

It localises to the cytoplasm. It carries out the reaction 1-(5-phospho-beta-D-ribosyl)-5-[(5-phospho-beta-D-ribosylamino)methylideneamino]imidazole-4-carboxamide = 5-[(5-phospho-1-deoxy-D-ribulos-1-ylimino)methylamino]-1-(5-phospho-beta-D-ribosyl)imidazole-4-carboxamide. It participates in amino-acid biosynthesis; L-histidine biosynthesis; L-histidine from 5-phospho-alpha-D-ribose 1-diphosphate: step 4/9. The polypeptide is 1-(5-phosphoribosyl)-5-[(5-phosphoribosylamino)methylideneamino] imidazole-4-carboxamide isomerase (Aromatoleum aromaticum (strain DSM 19018 / LMG 30748 / EbN1) (Azoarcus sp. (strain EbN1))).